Consider the following 200-residue polypeptide: MFEYLTGLITMVSPDFIVVDVNGVGYRVAVANPYAYQEDDQQAVQVFIYQAVKEDAITLFGFATQAEKRLFTQLIGVSGIGPKSALAILATPDHQGLIDAIQNGDDKYLSKFPGIGKKTASRIIIELKDKVVAVQDEVQLDFTAPGPLGPSAALQDALAALESLGYTTKQVERVQKQLEGLQGELSTNDYLSQGLKLLSR.

The domain I stretch occupies residues 1-63 (MFEYLTGLIT…EDAITLFGFA (63 aa)). Residues 64–142 (TQAEKRLFTQ…AVQDEVQLDF (79 aa)) form a domain II region. The interval 143–151 (TAPGPLGPS) is flexible linker. The interval 151-200 (SAALQDALAALESLGYTTKQVERVQKQLEGLQGELSTNDYLSQGLKLLSR) is domain III.

Belongs to the RuvA family. As to quaternary structure, homotetramer. Forms an RuvA(8)-RuvB(12)-Holliday junction (HJ) complex. HJ DNA is sandwiched between 2 RuvA tetramers; dsDNA enters through RuvA and exits via RuvB. An RuvB hexamer assembles on each DNA strand where it exits the tetramer. Each RuvB hexamer is contacted by two RuvA subunits (via domain III) on 2 adjacent RuvB subunits; this complex drives branch migration. In the full resolvosome a probable DNA-RuvA(4)-RuvB(12)-RuvC(2) complex forms which resolves the HJ.

It localises to the cytoplasm. The RuvA-RuvB-RuvC complex processes Holliday junction (HJ) DNA during genetic recombination and DNA repair, while the RuvA-RuvB complex plays an important role in the rescue of blocked DNA replication forks via replication fork reversal (RFR). RuvA specifically binds to HJ cruciform DNA, conferring on it an open structure. The RuvB hexamer acts as an ATP-dependent pump, pulling dsDNA into and through the RuvAB complex. HJ branch migration allows RuvC to scan DNA until it finds its consensus sequence, where it cleaves and resolves the cruciform DNA. The polypeptide is Holliday junction branch migration complex subunit RuvA (Limosilactobacillus fermentum (strain NBRC 3956 / LMG 18251) (Lactobacillus fermentum)).